A 317-amino-acid polypeptide reads, in one-letter code: ADIPOR-like receptor IZH1 (317 aa).

Over 1–80 the chain is Lumenal; sequence MSEERGMKEQ…FNNESINIYT (80 aa). A glycan (N-linked (GlcNAc...) asparagine) is linked at Asn73. Residues 81–101 form a helical membrane-spanning segment; the sequence is HLIPGVAYLVLFLIFADLVLA. At 102-113 the chain is on the cytoplasmic side; that stretch reads QLLPGLDAGEHR. The helical transmembrane segment at 114–136 threads the bilayer; sequence MLRFYLLGAFTCLACSSCFHCLK. Residues 137–148 lie on the Lumenal side of the membrane; the sequence is QHSEPHSRLWSK. Residues 149–169 form a helical membrane-spanning segment; the sequence is VDYLGILAQITCSTISLLYYG. Residues 170–175 lie on the Cytoplasmic side of the membrane; it reads YHSYPS. The helical transmembrane segment at 176-196 threads the bilayer; the sequence is HFVFFSTLTVALCSACAVLVL. A glycan (N-linked (GlcNAc...) asparagine) is linked at Asn197. At 197–210 the chain is on the lumenal side; it reads NDSFNTVAFRPLRA. A helical transmembrane segment spans residues 211–231; the sequence is FLFMAFGLSGVIPVLAGSYQF. At 232–243 the chain is on the cytoplasmic side; it reads GFAEWAARIQLK. A helical transmembrane segment spans residues 244 to 264; the sequence is YVLYEAVFYITGALVYGFRIP. The Lumenal segment spans residues 265–283; the sequence is ERFAPGKFDMVGHSHQIFH. A helical membrane pass occupies residues 284-304; it reads LLVVLGTLCHFRAVTGSYIFI. The Cytoplasmic segment spans residues 305 to 317; that stretch reads CTGKHYSSLLMFI.

Belongs to the ADIPOR family.

The protein localises to the endoplasmic reticulum membrane. Functionally, ADIPOR-like receptor involved in zinc metabolism either by altering membrane sterol content or by directly altering cellular zinc levels. This Eremothecium gossypii (strain ATCC 10895 / CBS 109.51 / FGSC 9923 / NRRL Y-1056) (Yeast) protein is ADIPOR-like receptor IZH1 (IZH1).